The sequence spans 251 residues: Hydroxyacylglutathione hydrolase (251 aa).

Positions 59, 61, 63, 64, 118, 141, and 179 each coordinate Zn(2+).

The protein belongs to the metallo-beta-lactamase superfamily. Glyoxalase II family. As to quaternary structure, monomer. Zn(2+) is required as a cofactor.

The catalysed reaction is an S-(2-hydroxyacyl)glutathione + H2O = a 2-hydroxy carboxylate + glutathione + H(+). It participates in secondary metabolite metabolism; methylglyoxal degradation; (R)-lactate from methylglyoxal: step 2/2. Functionally, thiolesterase that catalyzes the hydrolysis of S-D-lactoyl-glutathione to form glutathione and D-lactic acid. This Prochlorococcus marinus (strain NATL1A) protein is Hydroxyacylglutathione hydrolase.